The sequence spans 65 residues: Toxin VmKTx1 (65 aa).

The first 21 residues, 1 to 21 (MKTSCLLTILLLSFLVAVAVA), serve as a signal peptide directing secretion. The propeptide occupies 22 to 28 (EGERSAR). Cystine bridges form between cysteine 34–cysteine 54, cysteine 40–cysteine 59, cysteine 44–cysteine 61, and cysteine 49–cysteine 64. The residue at position 64 (cysteine 64) is a Cysteine amide.

Belongs to the short scorpion toxin superfamily. Potassium channel inhibitor family. Alpha-KTx 23 subfamily. Expressed by the venom gland.

Its subcellular location is the secreted. Voltage-gated potassium channel inhibitor. Selectively and reversibly binds (Kd=0.77 nM) and blocks hKv1.3/KCNA3 potassium channels of human T-lymphocytes. Also shows a very weak effect on hKv1.2/KCNA2 (Kd=7.1 uM). Also reduces the fraction of CD40L expressing T cells that are stimulated by alphaCD3/alphaCD28. This chain is Toxin VmKTx1, found in Vaejovis mexicanus smithi (Mexican scorpion).